A 139-amino-acid chain; its full sequence is MSAEFTYQDVAEHNTKKDLYVVIHDKVYDITKFVDEHPGGEEVLLDVAGQDSTEAFEDVGHSDEAREALEPLLVGTLKRQAGDPKPKAPLPSSLAPAAQTGTATGLGIGLYAVLVLGGLAGFAAYQYLQAQQGATAPSA.

Residues 2–78 (SAEFTYQDVA…LEPLLVGTLK (77 aa)) form the Cytochrome b5 heme-binding domain. Heme is bound by residues His37 and His61. A helical membrane pass occupies residues 105–125 (GLGIGLYAVLVLGGLAGFAAY).

Belongs to the cytochrome b5 family.

Its subcellular location is the endoplasmic reticulum membrane. The protein localises to the microsome membrane. Membrane bound hemoprotein which function as an electron carrier for several membrane bound oxygenases. This Neurospora crassa (strain ATCC 24698 / 74-OR23-1A / CBS 708.71 / DSM 1257 / FGSC 987) protein is Probable cytochrome b5.